Consider the following 406-residue polypeptide: uncharacterized protein (406 aa).

It belongs to the mycobacterial PPE family.

This is an uncharacterized protein from Mycobacterium tuberculosis (strain CDC 1551 / Oshkosh).